The following is an 873-amino-acid chain: Potassium voltage-gated channel subfamily KQT member 3 (873 aa).

A disordered region spans residues 1–41; sequence MGLKARRAAGAAGGGGGEGGGGGGGAANPAGGDSAVAGDEE. Over 1 to 121 the chain is Cytoplasmic; the sequence is MGLKARRAAG…IYDALERPRG (121 aa). Residues 11-26 are compositionally biased toward gly residues; it reads AAGGGGGEGGGGGGGA. Residue Thr-82 is modified to Phosphothreonine. Residues 122-144 traverse the membrane as a helical segment; sequence WALLYHALVFLIVLGCLILAVLT. Over 145 to 154 the chain is Extracellular; that stretch reads TFKEYETVSG. Residues 155-176 traverse the membrane as a helical segment; the sequence is DWLLLLETFAIFIFGAEFALRI. Residues 177–194 are Cytoplasmic-facing; it reads WAAGCCCRYKGWRGRLKF. Residues 195 to 214 form a helical membrane-spanning segment; it reads ARKPLCMLDIFVLIASVPVV. Topologically, residues 215–226 are extracellular; the sequence is AVGNQGNVLATS. The chain crosses the membrane as a helical; Voltage-sensor span at residues 227–245; that stretch reads LRSLRFLQILRMLRMDRRG. An a 1,2-diacyl-sn-glycero-3-phospho-(1D-myo-inositol-4,5-bisphosphate)-binding site is contributed by Arg-244. The Cytoplasmic portion of the chain corresponds to 246-257; it reads GTWKLLGSAICA. Residues 258 to 283 traverse the membrane as a helical segment; that stretch reads HSKELITAWYIGFLTLILSSFLVYLV. Position 260 (Lys-260) interacts with a 1,2-diacyl-sn-glycero-3-phospho-(1D-myo-inositol-4,5-bisphosphate). The Extracellular portion of the chain corresponds to 284 to 303; sequence EKDVPEMDAQGEEMKEEFET. An intramembrane region (pore-forming) is located at residues 304–316; the sequence is YADALWWGLITLA. The Selectivity filter motif lies at 317–322; that stretch reads TIGYGD. Residues 317-327 lie on the Extracellular side of the membrane; sequence TIGYGDKTPKT. A helical transmembrane segment spans residues 328–354; the sequence is WEGRLIAATFSLIGVSFFALPAGILGS. The Cytoplasmic segment spans residues 355 to 873; the sequence is GLALKVQEQH…SIWTPSNKPT (519 aa). Residues 357-538 form a mediates interaction with calmodulin region; it reads ALKVQEQHRQ…RLYKKKFKET (182 aa). Lys-367 lines the a 1,2-diacyl-sn-glycero-3-phospho-(1D-myo-inositol-4,5-bisphosphate) pocket. Disordered regions lie at residues 575–603, 723–742, and 766–873; these read PGPP…PRNE, RGGP…GSTY, and ELQG…NKPT. Composition is skewed to polar residues over residues 588–601, 725–741, and 844–873; these read KGSA…QSPR, GPSS…SGST, and DPFT…NKPT.

It belongs to the potassium channel family. KQT (TC 1.A.1.15) subfamily. Kv7.3/KCNQ3 sub-subfamily. As to quaternary structure, heterotetramer with KCNQ2; forms heterotetrameric M-channel responsible for the native M-current. Interacts with calmodulin; the interaction is calcium-independent, constitutive and participates in the proper assembly of a functional M-channel. Heteromultimer with KCNQ5. May associate with KCNE2. Interacts with IQCJ-SCHIP1. Interacts (via the pore module) with SLC5A3/SMIT1; forms a coregulatory complex that alters ion selectivity, voltage dependence and gating kinetics of the channel. Post-translationally, KCNQ2/KCNQ3 are ubiquitinated by NEDD4L. Ubiquitination leads to protein degradation. Degradation induced by NEDD4L is inhibited by USP36. In terms of tissue distribution, expressed in brain and sympathetic ganglia. In brain, expressed in cortex, hippocampus and at much lower levels in cerebellum. In sympathetic ganglia, expressed at approximately equal levels in both superior cervical ganglia and prevertebral ganglia.

The protein resides in the cell membrane. It catalyses the reaction K(+)(in) = K(+)(out). The enzyme catalyses Rb(+)(in) = Rb(+)(out). It carries out the reaction Cs(+)(in) = Cs(+)(out). The catalysed reaction is Na(+)(in) = Na(+)(out). Its activity is regulated as follows. Phosphatidylinositol-4,5-bisphosphate (PIP2) potentiates the activation of KCNQ channels by enhancing the electro-mechanical coupling of the voltage-sensing domain (VSD) and the pore-forming domain (PD). In the closed state of the channel, PIP2 is anchored at the S2-S3 loop; upon channel activation, PIP2 interacts with the S4-S5 linker and is involved in channel gating. Calcium suppresses KCNQ2-KCNQ3 channel currents, with calcium-bound calmodulin inducing a change in channel configuration which leads to the reduction of channel affinity for PIP2 and subsequent current suppression. M-channel is blocked by XE991. In terms of biological role, pore-forming subunit of the voltage-gated potassium (Kv) M-channel which is responsible for the M-current, a key controller of neuronal excitability. M-channel is composed of pore-forming subunits KCNQ2 and KCNQ3 assembled as heterotetramers, each subunit containing a voltage sensing domain (VSD) and a pore-forming domain (PD). The native M-current has a slowly activating and deactivating potassium conductance which plays a critical role in determining the subthreshold electrical excitability of neurons as well as the responsiveness to synaptic inputs. M-channel is selectively permeable in vitro to other cations besides potassium, in decreasing order of affinity K(+) &gt; Rb(+) &gt; Cs(+) &gt; Na(+). M-channel association with SLC5A3/SMIT1 alters channel ion selectivity, increasing Na(+) and Cs(+) permeation relative to K(+). Suppressed by activation of M1 muscarinic acetylcholine receptors. KCNQ3 also associates with KCNQ5 to form a functional channel in vitro and may also contribute to the M-current in brain. In Rattus norvegicus (Rat), this protein is Potassium voltage-gated channel subfamily KQT member 3.